The following is a 258-amino-acid chain: Chymotrypsin-like elastase family member 1 (258 aa).

A signal peptide spans 1–8 (MLVLYGHS). Residues 9 to 18 (TQDVPETNAR) constitute a propeptide, activation peptide. A Peptidase S1 domain is found at 19 to 256 (VVGGTEARRN…YITWINNVIA (238 aa)). A disulfide bond links Cys48 and Cys64. The Charge relay system role is filled by His63. Residues Glu77, Asn79, Gln82, and Glu87 each coordinate Ca(2+). Residue Asn79 is glycosylated (N-linked (GlcNAc...) asparagine). The Charge relay system role is filled by Asp111. 3 cysteine pairs are disulfide-bonded: Cys145–Cys212, Cys176–Cys192, and Cys202–Cys232. Ser206 (charge relay system) is an active-site residue. Asn233 carries N-linked (GlcNAc...) asparagine glycosylation.

This sequence belongs to the peptidase S1 family. Elastase subfamily. Requires Ca(2+) as cofactor.

Its subcellular location is the secreted. The enzyme catalyses Hydrolysis of proteins, including elastin. Preferential cleavage: Ala-|-Xaa.. In terms of biological role, serine proteases that hydrolyze many proteins in addition to elastin. In Canis lupus familiaris (Dog), this protein is Chymotrypsin-like elastase family member 1 (CELA1).